Reading from the N-terminus, the 171-residue chain is UPF0316 protein Exig_2248 (171 aa).

The next 3 membrane-spanning stretches (helical) occupy residues 4–24, 31–51, and 57–77; these read ILLI…RTIM, IIAG…LGIV, and TVGM…GGFV.

This sequence belongs to the UPF0316 family.

Its subcellular location is the cell membrane. The sequence is that of UPF0316 protein Exig_2248 from Exiguobacterium sibiricum (strain DSM 17290 / CCUG 55495 / CIP 109462 / JCM 13490 / 255-15).